The sequence spans 202 residues: Recoverin (202 aa).

G2 is lipidated: N-myristoyl glycine. C39 carries the cysteine sulfenic acid (-SOH) modification. 4 consecutive EF-hand domains span residues 41–59, 61–96, 97–132, and 147–182; these read SGRI…FFPD, DPKA…TTAG, KPTQ…IFKM, and TPEK…NKEI. Ca(2+) contacts are provided by D74, N76, D78, T80, E85, D110, D112, N114, T116, and E121. Positions 189 to 192 are interaction with GRK1; the sequence is EPQK.

Belongs to the recoverin family. In terms of assembly, homodimer; disulfide-linked. Homodimerization is caused by prolonged intense illumination. May form a complex composed of RHO, GRK1 and RCVRN in a Ca(2+)-dependent manner; RCVRN prevents the interaction between GRK1 and RHO. Interacts (via C-terminus) with GRK1 (via N-terminus); the interaction is Ca(2+)-dependent. In terms of processing, the N-terminal glycine is linked to one of four different types of acyl groups. The most abundant is myristoleate (14:1), but 14:0, 14:2, and 12:0 acyl residues are also present. The Ca(2+) induced exposure of the myristoyl group, known as the calcium-myristoyl switch, promotes RCVRN binding to the photoreceptor cell membranes only when intracellular Ca(2+) concentration is high. Oxidation on Cys-39 occurs in response to prolonged intense illumination and results in the formation of disulfide homodimers, and to a lesser extent disulfide-linked heterodimers. Expressed in rod photoreceptors in the retina (at protein level).

The protein localises to the photoreceptor inner segment. It is found in the cell projection. The protein resides in the cilium. It localises to the photoreceptor outer segment. Its subcellular location is the photoreceptor outer segment membrane. The protein localises to the perikaryon. Acts as a calcium sensor and regulates phototransduction of cone and rod photoreceptor cells. Modulates light sensitivity of cone photoreceptor in dark and dim conditions. In response to high Ca(2+) levels induced by low light levels, prolongs RHO/rhodopsin activation in rod photoreceptor cells by binding to and inhibiting GRK1-mediated phosphorylation of RHO/rhodopsin. Plays a role in scotopic vision/enhances vision in dim light by enhancing signal transfer between rod photoreceptors and rod bipolar cells. Improves rod photoreceptor sensitivity in dim light and mediates response of rod photoreceptors to facilitate detection of change and motion in bright light. The chain is Recoverin (Rcvrn) from Mus musculus (Mouse).